Here is a 182-residue protein sequence, read N- to C-terminus: MKLADVEDHMQKSVEATQRAFNTIRTGRANTSLLDRVTVEYYGAETPLRSLANISTPDSSTIAIQPFDRNSLNLIEKAISMSDLGLTPNNDGTVIRLNIPPLTSDRRKELVKTASKLAEEGKVSIRNVRRDAVDSVKKQGKAGELSEDEVKDLQDKIQKLTDKYIAKVDGLLAEKEKDISTV.

This sequence belongs to the RRF family.

It is found in the cytoplasm. Responsible for the release of ribosomes from messenger RNA at the termination of protein biosynthesis. May increase the efficiency of translation by recycling ribosomes from one round of translation to another. The polypeptide is Ribosome-recycling factor (Cyanothece sp. (strain PCC 7425 / ATCC 29141)).